The chain runs to 178 residues: Platelet inhibitor triplatin-2 (178 aa).

Positions 1-18 (MKMIISLTFLGILMLAFA) are cleaved as a signal peptide. Intrachain disulfides connect Cys-25-Cys-134, Cys-60-Cys-178, and Cys-90-Cys-106.

The protein belongs to the calycin superfamily. Triabin family. As to expression, expressed in salivary glands.

It localises to the secreted. Inhibits platelet aggregation and vasoconstriction through binding to distinct eicosanoids involved in inflammation (acts as a scavenger), and has a role in inhibiting host innate immunity by impairing platelet-assisted formation of neutrophil extracellular traps (NETs). Inhibits platelet aggregation by collagen, and low doses of thromboxane A2 mimetic (TXA2 mimetic), and arachidonic acid (AA) without affecting aggregation induced by ADP, convulxin (GP6 agonist), and PMA. Binds to TXA2, TXB2, prostaglandine H2 mimetic (PGH2 mimetic), PGJ2, and PGF2alpha. Binding is not observed to leukotrienes, AA, and biogenic amines (PGE1, 5(S)-HETE, 12(S)-HETE, 20-HETE, norepinephrine, epinephrine, serotonin, LTC4 and ADP). Induces relaxation of aorta rat previously contracted with TXA2 mimetic. Moreover, it also impairs platelet-assisted formation of neutrophil extracellular traps (NETs). NETs are web-like structures of DNA and proteins that play an important role in killing of pathogens. In addition, NETs are implicated in thrombus formation. In vivo, this protein exhibits antithrombotic activity in two distinct mice models that are highly dependent on platelets. It is noteworthy that it inhibits thrombosis without promoting excessive bleeding. This chain is Platelet inhibitor triplatin-2, found in Triatoma infestans (Assassin bug).